The sequence spans 181 residues: ATP synthase subunit delta (181 aa).

This sequence belongs to the ATPase delta chain family. F-type ATPases have 2 components, F(1) - the catalytic core - and F(0) - the membrane proton channel. F(1) has five subunits: alpha(3), beta(3), gamma(1), delta(1), epsilon(1). F(0) has three main subunits: a(1), b(2) and c(10-14). The alpha and beta chains form an alternating ring which encloses part of the gamma chain. F(1) is attached to F(0) by a central stalk formed by the gamma and epsilon chains, while a peripheral stalk is formed by the delta and b chains.

It is found in the cell inner membrane. F(1)F(0) ATP synthase produces ATP from ADP in the presence of a proton or sodium gradient. F-type ATPases consist of two structural domains, F(1) containing the extramembraneous catalytic core and F(0) containing the membrane proton channel, linked together by a central stalk and a peripheral stalk. During catalysis, ATP synthesis in the catalytic domain of F(1) is coupled via a rotary mechanism of the central stalk subunits to proton translocation. Functionally, this protein is part of the stalk that links CF(0) to CF(1). It either transmits conformational changes from CF(0) to CF(1) or is implicated in proton conduction. This is ATP synthase subunit delta from Hyphomonas neptunium (strain ATCC 15444).